The following is a 452-amino-acid chain: Keratin, type II cytoskeletal 80 (452 aa).

The segment at 1 to 82 (MAYRSCVVGF…DPAVQQQKNQ (82 aa)) is head. Ser-45 carries the post-translational modification Phosphoserine. Residues 82–118 (QEKEEMKALNDKFASLIGKVQALEQRNQLLETRWSFL) form a coil 1A region. In terms of domain architecture, IF rod spans 83–394 (EKEEMKALND…KLMEGEESRM (312 aa)). Positions 119–135 (QGQGSATFDLSHHYETF) are linker 1. The coil 1B stretch occupies residues 136 to 227 (QGRLQEELRK…TVYEQELKDL (92 aa)). Residues 228–251 (TAQVKDVSVTVGLDSRCHIDLSGI) are linker 12. The coil 2 stretch occupies residues 252–390 (VEEVKAQYDA…ATYHKLMEGE (139 aa)). The tract at residues 391–452 (ESRMDLPSAT…YLSQESEASE (62 aa)) is tail. The disordered stretch occupies residues 412–452 (TASKSGLTKTSSRKKKNRRGPVIKITEMSEKYLSQESEASE). Over residues 422–432 (SSRKKKNRRGP) the composition is skewed to basic residues. Residues 443–452 (YLSQESEASE) are compositionally biased toward polar residues.

This sequence belongs to the intermediate filament family. As to quaternary structure, heterotetramer of two type I and two type II keratins.

This is Keratin, type II cytoskeletal 80 (Krt80) from Mus musculus (Mouse).